Reading from the N-terminus, the 273-residue chain is ComE operon protein 4 (273 aa).

It belongs to the pyrroline-5-carboxylate reductase family.

In terms of biological role, dispensable for transformability. Not known if it can act as a pyrroline-5-carboxylate reductase. In Bacillus subtilis (strain 168), this protein is ComE operon protein 4 (comER).